Reading from the N-terminus, the 169-residue chain is MRVAVTGTPGTGKTTATGRLDTALDVAHLNDLVGTEGLYDGVDADRGSKIVDVDAVRDHFAGREDVLVESHLAHRLDDLDAVVVLRCAPETLATRLQDRGDSPEKAAENADSEALAIILSEAVRGHGADAVYEIDTTDRSPDAVAAAIQAVLDGDREPSAGTVDYTDYV.

Residues glycine 10, glycine 12, lysine 13, threonine 14, and threonine 15 each contribute to the ATP site. Residues 28 to 51 are NMP; that stretch reads HLNDLVGTEGLYDGVDADRGSKIV. The interval 98–108 is LID; the sequence is DRGDSPEKAAE. Arginine 99 lines the ATP pocket.

It belongs to the adenylate kinase family. AK6 subfamily. In terms of assembly, interacts with uS11. Not a structural component of 40S pre-ribosomes, but transiently interacts with them by binding to uS11.

It carries out the reaction AMP + ATP = 2 ADP. It catalyses the reaction ATP + H2O = ADP + phosphate + H(+). Broad-specificity nucleoside monophosphate (NMP) kinase that catalyzes the reversible transfer of the terminal phosphate group between nucleoside triphosphates and monophosphates. Also has ATPase activity. Involved in the late maturation steps of the 30S ribosomal particles, specifically 16S rRNA maturation. While NMP activity is not required for ribosome maturation, ATPase activity is. Associates transiently with small ribosomal subunit protein uS11. ATP hydrolysis breaks the interaction with uS11. May temporarily remove uS11 from the ribosome to enable a conformational change of the ribosomal RNA that is needed for the final maturation step of the small ribosomal subunit. The polypeptide is Putative adenylate kinase (Halobacterium salinarum (strain ATCC 29341 / DSM 671 / R1)).